Here is a 235-residue protein sequence, read N- to C-terminus: Large ribosomal subunit protein uL1 (235 aa).

The protein belongs to the universal ribosomal protein uL1 family. In terms of assembly, part of the 50S ribosomal subunit.

Binds directly to 23S rRNA. The L1 stalk is quite mobile in the ribosome, and is involved in E site tRNA release. Its function is as follows. Protein L1 is also a translational repressor protein, it controls the translation of the L11 operon by binding to its mRNA. This is Large ribosomal subunit protein uL1 from Synechococcus sp. (strain CC9311).